The sequence spans 202 residues: LexA repressor (202 aa).

Positions 32 to 52 form a DNA-binding region, H-T-H motif; the sequence is RAEVCSAFGFKSPNAAETHLR. Residues S121 and K158 each act as for autocatalytic cleavage activity in the active site.

It belongs to the peptidase S24 family. As to quaternary structure, homodimer.

It carries out the reaction Hydrolysis of Ala-|-Gly bond in repressor LexA.. Its function is as follows. Represses a number of genes involved in the response to DNA damage (SOS response), including recA and lexA. In the presence of single-stranded DNA, RecA interacts with LexA causing an autocatalytic cleavage which disrupts the DNA-binding part of LexA, leading to derepression of the SOS regulon and eventually DNA repair. This chain is LexA repressor, found in Azoarcus sp. (strain BH72).